The following is a 479-amino-acid chain: Sulfate adenylyltransferase subunit 1 (479 aa).

Residues 25–239 enclose the tr-type G domain; it reads KSLLRFLTCG…EVLETVDIQR (215 aa). The segment at 34-41 is G1; that stretch reads GSVDDGKS. GTP is bound at residue 34 to 41; sequence GSVDDGKS. The segment at 92–96 is G2; sequence GITID. The G3 stretch occupies residues 113–116; sequence DTPG. GTP is bound by residues 113-117 and 168-171; these read DTPGH and NKMD. Residues 168–171 form a G4 region; the sequence is NKMD. A G5 region spans residues 206 to 208; sequence SAL.

This sequence belongs to the TRAFAC class translation factor GTPase superfamily. Classic translation factor GTPase family. CysN/NodQ subfamily. As to quaternary structure, heterodimer composed of CysD, the smaller subunit, and CysN.

The enzyme catalyses sulfate + ATP + H(+) = adenosine 5'-phosphosulfate + diphosphate. Its pathway is sulfur metabolism; hydrogen sulfide biosynthesis; sulfite from sulfate: step 1/3. Functionally, with CysD forms the ATP sulfurylase (ATPS) that catalyzes the adenylation of sulfate producing adenosine 5'-phosphosulfate (APS) and diphosphate, the first enzymatic step in sulfur assimilation pathway. APS synthesis involves the formation of a high-energy phosphoric-sulfuric acid anhydride bond driven by GTP hydrolysis by CysN coupled to ATP hydrolysis by CysD. The chain is Sulfate adenylyltransferase subunit 1 from Salmonella paratyphi B (strain ATCC BAA-1250 / SPB7).